The following is a 146-amino-acid chain: 2S sulfur-rich seed storage protein 1 (146 aa).

The first 22 residues, 1–22 (MAKISVAAAALLVLMALGHATA), serve as a signal peptide directing secretion. The propeptide occupies 23–36 (FRATVTTTVVEEEN). Gln37 bears the Pyrrolidone carboxylic acid mark. 4 cysteine pairs are disulfide-bonded: Cys40-Cys92, Cys53-Cys81, Cys82-Cys130, and Cys94-Cys137. Positions 65–69 (PYQTM) are excised as a propeptide. Positions 143–146 (IAGF) are excised as a propeptide.

This sequence belongs to the 2S seed storage albumins family. In terms of assembly, the mature protein consists of a small and a large chain linked by disulfide bonds.

This is a 2S seed storage protein. The sequence is that of 2S sulfur-rich seed storage protein 1 (BE2S1) from Bertholletia excelsa (Brazil nut).